Reading from the N-terminus, the 621-residue chain is Laccase-2 (621 aa).

A signal peptide spans 1–23 (MMKSFFSAAALLLGLVAPSAVLA). Positions 24 to 48 (APSLPGVPREVTRDLLRPVEERQSS) are excised as a propeptide. A disulfide bridge links C49 with C57. 2 consecutive Plastocyanin-like domains span residues 78-201 (TRTY…IVVN) and 210-367 (IDLG…LPTN). N-linked (GlcNAc...) asparagine glycosylation is present at N133. 4 residues coordinate Cu cation: H138, H140, H183, and H185. 2 disulfides stabilise this stretch: C159-C586 and C343-C377. Residues N261, N276, N289, N325, and N334 are each glycosylated (N-linked (GlcNAc...) asparagine). N-linked (GlcNAc...) asparagine glycosylation is found at N401, N421, and N441. The Plastocyanin-like 3 domain occupies 430–566 (DKPIVDYVIA…GGLSVQYLER (137 aa)). Positions 476, 479, 481, 548, 549, 550, and 554 each coordinate Cu cation. A propeptide spanning residues 606–621 (KVKKWVGEHPDWYIKN) is cleaved from the precursor.

The protein belongs to the multicopper oxidase family. Monomer. Cu cation serves as cofactor. Proteolytically processed at both its N-terminus and its C-terminus.

The protein resides in the secreted. It carries out the reaction 4 hydroquinone + O2 = 4 benzosemiquinone + 2 H2O. Its function is as follows. Probably involved in lignin degradation and in the detoxification of lignin-derived products in its natural habitat (herbivorous dung), which is rich in lignin of grasses and straw. Probably involved in melanin synthesis and in perithecia development. The polypeptide is Laccase-2 (LAC2) (Podospora anserina (Pleurage anserina)).